Consider the following 335-residue polypeptide: Fructose-1,6-bisphosphatase class 1 (335 aa).

4 residues coordinate Mg(2+): Glu-92, Asp-114, Leu-116, and Asp-117. Substrate-binding positions include 117–120 (DGSS), Asn-209, and Lys-275. Glu-281 provides a ligand contact to Mg(2+).

The protein belongs to the FBPase class 1 family. In terms of assembly, homotetramer. It depends on Mg(2+) as a cofactor.

Its subcellular location is the cytoplasm. It catalyses the reaction beta-D-fructose 1,6-bisphosphate + H2O = beta-D-fructose 6-phosphate + phosphate. It functions in the pathway carbohydrate biosynthesis; gluconeogenesis. This is Fructose-1,6-bisphosphatase class 1 from Paracidovorax citrulli (strain AAC00-1) (Acidovorax citrulli).